Consider the following 129-residue polypeptide: Large ribosomal subunit protein bL12 (129 aa).

The protein belongs to the bacterial ribosomal protein bL12 family. In terms of assembly, homodimer. Part of the ribosomal stalk of the 50S ribosomal subunit. Forms a multimeric L10(L12)X complex, where L10 forms an elongated spine to which 2 to 4 L12 dimers bind in a sequential fashion. Binds GTP-bound translation factors.

Functionally, forms part of the ribosomal stalk which helps the ribosome interact with GTP-bound translation factors. Is thus essential for accurate translation. The chain is Large ribosomal subunit protein bL12 from Thermosipho melanesiensis (strain DSM 12029 / CIP 104789 / BI429).